We begin with the raw amino-acid sequence, 383 residues long: Putative glutamate--cysteine ligase 2-1 (383 aa).

It belongs to the glutamate--cysteine ligase type 2 family. YbdK subfamily.

The enzyme catalyses L-cysteine + L-glutamate + ATP = gamma-L-glutamyl-L-cysteine + ADP + phosphate + H(+). ATP-dependent carboxylate-amine ligase which exhibits weak glutamate--cysteine ligase activity. The protein is Putative glutamate--cysteine ligase 2-1 of Arthrobacter sp. (strain FB24).